Consider the following 302-residue polypeptide: Lactoylglutathione lyase (302 aa).

VOC domains follow at residues 11–153 (KLNH…LVSQ) and 166–301 (RFNH…VIEQ). His-14 contacts Zn(2+). Residue Arg-18 coordinates substrate. Glu-75 contributes to the Zn(2+) binding site. Residues Asn-79, Arg-99, and His-103 each coordinate substrate. 2 residues coordinate Zn(2+): His-103 and Glu-149. The active-site Proton donor/acceptor is the Glu-149.

This sequence belongs to the glyoxalase I family. Monomer. The cofactor is Zn(2+). Requires Cu(2+) as cofactor. Ni(2+) serves as cofactor. It depends on Mn(2+) as a cofactor.

It catalyses the reaction (R)-S-lactoylglutathione = methylglyoxal + glutathione. The protein operates within secondary metabolite metabolism; methylglyoxal degradation; (R)-lactate from methylglyoxal: step 1/2. Functionally, catalyzes the conversion of hemimercaptal, formed from methylglyoxal and glutathione, to S-lactoylglutathione. In Schizosaccharomyces pombe (strain 972 / ATCC 24843) (Fission yeast), this protein is Lactoylglutathione lyase (glo1).